The sequence spans 92 residues: DNA/RNA-binding protein Alba (92 aa).

The residue at position 11 (Lys11) is an N6-acetyllysine.

This sequence belongs to the histone-like Alba family. Post-translationally, acetylated. Acetylation at Lys-11 decreases DNA-binding affinity.

It is found in the cytoplasm. It localises to the chromosome. Binds double-stranded DNA tightly but without sequence specificity. Involved in DNA compaction. This chain is DNA/RNA-binding protein Alba, found in Pyrobaculum calidifontis (strain DSM 21063 / JCM 11548 / VA1).